A 629-amino-acid polypeptide reads, in one-letter code: MDHPERFDVIVVGGGHAGTEAAMAAARIGARTLLLTHSIETVGQMSCNPAIGGIGKGHLVREIDALGGIMARAADRGGIQFRTLNSRKGPAVRATRAQADRQLYRQAIRRAVENQPRLALFQQSVDDLIVEGGRVTGVVTGMGLRFRAPAVVLTVGTFLGGRIHIGESNYGGGRAGDPAANALAARLRELPFQVDRLKTGTPPRLDGRTIDWARLTEQPGDDPAPVFSFLGRPDEHPAQVPCHIAHTRPETHDIIRGALDRSPMYSGTIEGVGPRYCPSIEDKVVRFADKGSHQIFLEPEGLDTHEVYPNGISTSLPFDVQYELVRSIPGLEQARIVRPGYAIEYDFFDPRGLHPTLETRHLEGLWFAGQINGTTGYEEAAAQGLLAGLNAALRVQGREPWYPRRDQAYLGVLVDDLITRGTREPYRMFTSRAEYRLMLREDNADLRLTPIGRDLGLVDDERWRRFNAKREALEREQARLAATLIRPGDLPDALARQVLGGPLRKEQRLEELLRRPDVGYADLMRLPGAGDPVPDAEVVEQLEIQARYAGYLERQHDEVARARRHEQLPLPEGLAYDRVAGLSSEVREKLAAHRPATVGQAARIPGVTPAAVSLLLVHLRRQGLLRESA.

FAD is bound at residue 13 to 18 (GGGHAG). 273–287 (GPRYCPSIEDKVVRF) is an NAD(+) binding site.

It belongs to the MnmG family. In terms of assembly, homodimer. Heterotetramer of two MnmE and two MnmG subunits. FAD serves as cofactor.

The protein localises to the cytoplasm. NAD-binding protein involved in the addition of a carboxymethylaminomethyl (cmnm) group at the wobble position (U34) of certain tRNAs, forming tRNA-cmnm(5)s(2)U34. This is tRNA uridine 5-carboxymethylaminomethyl modification enzyme MnmG from Alkalilimnicola ehrlichii (strain ATCC BAA-1101 / DSM 17681 / MLHE-1).